The following is a 161-amino-acid chain: Protein-export protein SecB (161 aa).

It belongs to the SecB family. Homotetramer, a dimer of dimers. One homotetramer interacts with 1 SecA dimer.

The protein localises to the cytoplasm. In terms of biological role, one of the proteins required for the normal export of preproteins out of the cell cytoplasm. It is a molecular chaperone that binds to a subset of precursor proteins, maintaining them in a translocation-competent state. It also specifically binds to its receptor SecA. This is Protein-export protein SecB from Shewanella putrefaciens (strain CN-32 / ATCC BAA-453).